We begin with the raw amino-acid sequence, 347 residues long: Heat-inducible transcription repressor HrcA (347 aa).

Belongs to the HrcA family.

In terms of biological role, negative regulator of class I heat shock genes (grpE-dnaK-dnaJ and groELS operons). Prevents heat-shock induction of these operons. The chain is Heat-inducible transcription repressor HrcA from Lactococcus lactis subsp. lactis (strain IL1403) (Streptococcus lactis).